A 775-amino-acid polypeptide reads, in one-letter code: Melanoma-associated antigen D1 (775 aa).

The disordered stretch occupies residues serine 37–glutamine 330. Residues alanine 39–serine 50 are compositionally biased toward low complexity. Polar residues-rich tracts occupy residues proline 52–threonine 63, lysine 84–arginine 100, lysine 107–threonine 120, glycine 149–lysine 178, alanine 221–serine 235, valine 247–glycine 258, and leucine 296–threonine 308. 19 consecutive repeat copies span residues tryptophan 292 to alanine 297, tryptophan 298 to glycine 303, tryptophan 304 to alanine 309, tryptophan 329 to alanine 334, tryptophan 335 to isoleucine 340, tryptophan 341 to isoleucine 346, tryptophan 347 to isoleucine 352, tryptophan 353 to valine 358, tryptophan 359 to valine 364, tryptophan 365 to alanine 370, tryptophan 371 to glycine 376, tryptophan 377 to serine 382, tryptophan 383 to serine 388, tryptophan 389 to aspartate 394, tryptophan 395 to aspartate 400, tryptophan 401 to aspartate 406, tryptophan 407 to aspartate 412, tryptophan 413 to aspartate 418, and tryptophan 419 to aspartate 424. Residues tryptophan 292–proline 441 are 22 X 6 AA tandem repeats of W-[PQ]-X-P-X-X. Over residues alanine 309–proline 326 the composition is skewed to low complexity. The disordered stretch occupies residues threonine 374–methionine 409. The segment covering proline 375–aspartate 406 has biased composition (low complexity). Residues tryptophan 425 to aspartate 429 form a 20; approximate repeat. Repeat copies occupy residues tryptophan 430–aspartate 435 and tryptophan 436–proline 441. Residues glutamine 437 to arginine 452 show a composition bias toward low complexity. Positions glutamine 437–arginine 463 are disordered. One can recognise an MAGE domain in the interval leucine 468–alanine 666.

As to quaternary structure, interacts with DLX5, DLX7 and MSX2 and forms homomultimers. Interacts with UNC5A. Interacts with TRIM28 and PJA1. Interacts with NGFR/p75NTR and RORA. In terms of tissue distribution, ubiquitously expressed in many adult tissues, except for the spleen. Expressed in osteoblastic and chondrogenic cell lines and also during embryonic development.

The protein resides in the nucleus. It is found in the cytoplasm. The protein localises to the cell membrane. In terms of biological role, involved in the apoptotic response after nerve growth factor (NGF) binding in neuronal cells. Inhibits cell cycle progression, and facilitates NGFR-mediated apoptosis. May act as a regulator of the function of DLX family members. May enhance ubiquitin ligase activity of RING-type zinc finger-containing E3 ubiquitin-protein ligases. Proposed to act through recruitment and/or stabilization of the Ubl-conjugating enzyme (E2) at the E3:substrate complex. Plays a role in the circadian rhythm regulation. May act as RORA coregulator, modulating the expression of core clock genes such as BMAL1 and NFIL3, induced, or NR1D1, repressed. This Mus musculus (Mouse) protein is Melanoma-associated antigen D1 (Maged1).